Here is a 308-residue protein sequence, read N- to C-terminus: Porphobilinogen deaminase (308 aa).

An S-(dipyrrolylmethanemethyl)cysteine modification is found at cysteine 241.

The protein belongs to the HMBS family. As to quaternary structure, monomer. Dipyrromethane is required as a cofactor.

The enzyme catalyses 4 porphobilinogen + H2O = hydroxymethylbilane + 4 NH4(+). It functions in the pathway porphyrin-containing compound metabolism; protoporphyrin-IX biosynthesis; coproporphyrinogen-III from 5-aminolevulinate: step 2/4. Tetrapolymerization of the monopyrrole PBG into the hydroxymethylbilane pre-uroporphyrinogen in several discrete steps. The sequence is that of Porphobilinogen deaminase from Exiguobacterium sibiricum (strain DSM 17290 / CCUG 55495 / CIP 109462 / JCM 13490 / 255-15).